Consider the following 349-residue polypeptide: GTP 3',8-cyclase (349 aa).

The 220-residue stretch at 26 to 245 folds into the Radical SAM core domain; it reads GFGRAVTYLR…SSFWTLTDIP (220 aa). A GTP-binding site is contributed by Arg35. [4Fe-4S] cluster is bound by residues Cys42 and Cys46. Tyr48 is a binding site for S-adenosyl-L-methionine. Cys49 is a [4Fe-4S] cluster binding site. Arg84 serves as a coordination point for GTP. Gly88 contributes to the S-adenosyl-L-methionine binding site. Thr118 provides a ligand contact to GTP. An S-adenosyl-L-methionine-binding site is contributed by Ser142. Lys178 lines the GTP pocket. Met212 contacts S-adenosyl-L-methionine. Cys275 and Cys278 together coordinate [4Fe-4S] cluster. Position 280–282 (280–282) interacts with GTP; the sequence is RVR. Cys292 contacts [4Fe-4S] cluster.

This sequence belongs to the radical SAM superfamily. MoaA family. As to quaternary structure, monomer and homodimer. Requires [4Fe-4S] cluster as cofactor.

The catalysed reaction is GTP + AH2 + S-adenosyl-L-methionine = (8S)-3',8-cyclo-7,8-dihydroguanosine 5'-triphosphate + 5'-deoxyadenosine + L-methionine + A + H(+). The protein operates within cofactor biosynthesis; molybdopterin biosynthesis. Its function is as follows. Catalyzes the cyclization of GTP to (8S)-3',8-cyclo-7,8-dihydroguanosine 5'-triphosphate. The polypeptide is GTP 3',8-cyclase (Caulobacter vibrioides (strain ATCC 19089 / CIP 103742 / CB 15) (Caulobacter crescentus)).